The sequence spans 416 residues: Thyroid hormone receptor alpha-A (416 aa).

Polar residues predominate over residues 1 to 13; it reads MEPMSNKQDSNSS. The disordered stretch occupies residues 1–37; it reads MEPMSNKQDSNSSEGDEKGWPDVPKRKRKNSQCSMKS. The interval 1-58 is modulating; the sequence is MEPMSNKQDSNSSEGDEKGWPDVPKRKRKNSQCSMKSMSALSVSVPGYIPSYLEKDEP. Residues 15 to 24 show a composition bias toward basic and acidic residues; sequence GDEKGWPDVP. NR C4-type zinc fingers lie at residues 59-79 and 97-121; these read CVVC…CEGC and CKYE…FKKC. A DNA-binding region (nuclear receptor) is located at residues 59 to 126; sequence CVVCGDKATG…RFKKCISVGM (68 aa). An NR LBD domain is found at 169-413; sequence AEWELIRMAT…PPLFLEVFED (245 aa).

It belongs to the nuclear hormone receptor family. NR1 subfamily.

The protein resides in the nucleus. High affinity receptor for triiodothyronine. The protein is Thyroid hormone receptor alpha-A (thra1) of Paralichthys olivaceus (Bastard halibut).